Here is a 183-residue protein sequence, read N- to C-terminus: Ankyrin repeat domain-containing protein 39 (183 aa).

4 ANK repeats span residues 30–59 (DFER…DPSQ), 63–92 (AGYT…KCDA), 96–125 (GGAT…NPRL), and 129–158 (DGMT…ALKA). A Phosphoserine modification is found at Ser153.

This sequence belongs to the ANKRD39 family.

In Bos taurus (Bovine), this protein is Ankyrin repeat domain-containing protein 39 (ANKRD39).